The chain runs to 748 residues: Histone-lysine N-methyltransferase EZH2 (748 aa).

A compositionally biased stretch (acidic residues) spans Asp-183–Asp-199. 2 disordered regions span residues Asp-183–Leu-215 and Thr-347–Pro-428. Positions Asp-200 to Leu-215 are enriched in basic and acidic residues. Over residues Pro-348–Arg-359 the composition is skewed to basic residues. Basic and acidic residues predominate over residues Glu-376–Gly-387. A CXC domain is found at Cys-505–Ser-607. The 116-residue stretch at Lys-614 to Arg-729 folds into the SET domain.

This sequence belongs to the class V-like SAM-binding methyltransferase superfamily. Histone-lysine methyltransferase family. EZ subfamily. In terms of assembly, component of the prc2/eed-ezh2 complex.

The protein localises to the nucleus. It catalyses the reaction L-lysyl(27)-[histone H3] + 3 S-adenosyl-L-methionine = N(6),N(6),N(6)-trimethyl-L-lysyl(27)-[histone H3] + 3 S-adenosyl-L-homocysteine + 3 H(+). Its function is as follows. Polycomb group (PcG) protein. Catalytic subunit of the prc2/eed-ezh2 complex, which methylates 'Lys-9' and 'Lys-27' of histone H3, leading to transcriptional repression of the affected target gene. May regulate the circadian clock via histone methylation at the promoter of the circadian genes. This chain is Histone-lysine N-methyltransferase EZH2 (ezh2-b), found in Xenopus laevis (African clawed frog).